A 263-amino-acid polypeptide reads, in one-letter code: Type III pantothenate kinase (263 aa).

14–21 (DIGNTSVN) contacts ATP. 115–118 (GADR) contacts substrate. The active-site Proton acceptor is the Asp-117. K(+) is bound at residue Asp-137. Thr-140 lines the ATP pocket. Thr-192 contributes to the substrate binding site.

This sequence belongs to the type III pantothenate kinase family. Homodimer. Requires NH4(+) as cofactor. K(+) is required as a cofactor.

The protein localises to the cytoplasm. It carries out the reaction (R)-pantothenate + ATP = (R)-4'-phosphopantothenate + ADP + H(+). It participates in cofactor biosynthesis; coenzyme A biosynthesis; CoA from (R)-pantothenate: step 1/5. Catalyzes the phosphorylation of pantothenate (Pan), the first step in CoA biosynthesis. The polypeptide is Type III pantothenate kinase (Dehalococcoides mccartyi (strain CBDB1)).